The sequence spans 215 residues: Large ribosomal subunit protein uL4 (215 aa).

The segment at 46 to 72 (TAKSKNRAEVSGGGRKPWAQKGGGRAR) is disordered. Residues 56-71 (SGGGRKPWAQKGGGRA) are compositionally biased toward gly residues.

The protein belongs to the universal ribosomal protein uL4 family. As to quaternary structure, part of the 50S ribosomal subunit.

In terms of biological role, one of the primary rRNA binding proteins, this protein initially binds near the 5'-end of the 23S rRNA. It is important during the early stages of 50S assembly. It makes multiple contacts with different domains of the 23S rRNA in the assembled 50S subunit and ribosome. Forms part of the polypeptide exit tunnel. This is Large ribosomal subunit protein uL4 from Helicobacter pylori (strain Shi470).